The sequence spans 147 residues: Hemoglobin subunit epsilon (147 aa).

The Globin domain occupies His3 to His147. His64 and His93 together coordinate heme b.

The protein belongs to the globin family. Heterotetramer of two epsilon chains and two alpha chains. Hemoglobin E (Hbe) contains a alpha-A chains while hemoglobin M (Hbm) contains alpha-D chains.

In terms of biological role, beta-type chain found in early embryos. The sequence is that of Hemoglobin subunit epsilon (HBE) from Gallus gallus (Chicken).